A 364-amino-acid polypeptide reads, in one-letter code: Flavonoid 3'-O-methyltransferase 3 (364 aa).

Residue Asp232 coordinates S-adenosyl-L-methionine. His270 functions as the Proton acceptor in the catalytic mechanism.

Belongs to the class I-like SAM-binding methyltransferase superfamily. Cation-independent O-methyltransferase family. Homodimer.

It carries out the reaction quercetin + S-adenosyl-L-methionine = isorhamnetin + S-adenosyl-L-homocysteine + H(+). It catalyses the reaction luteolin + S-adenosyl-L-methionine = chrysoeriol + S-adenosyl-L-homocysteine + H(+). The catalysed reaction is a 3'-hydroxyflavone + S-adenosyl-L-methionine = a 3'-methoxyflavone + S-adenosyl-L-homocysteine + H(+). The enzyme catalyses rhamnetin + S-adenosyl-L-methionine = rhamnacene + S-adenosyl-L-homocysteine + H(+). It carries out the reaction 3',4',7,8-tetrahydroxyflavone + S-adenosyl-L-methionine = 4',7,8-trihydroxy-3'-methoxyflavone-7-olate + S-adenosyl-L-homocysteine + H(+). It catalyses the reaction taxifolin + S-adenosyl-L-methionine = taxifolin 3'-methyl ether + S-adenosyl-L-homocysteine + H(+). It functions in the pathway flavonoid metabolism. Its function is as follows. Flavonoid 3'-O-methyltransferase involved in the biosynthesis of polymethoxylated flavonoids natural products such as pebrellin, aroma compounds which contribute to the flavor of peppermint, and exhibit pharmacological activities such as anti-allergic, anti-oxidant, antibacterial, anti-proliferative, and anti-inflammatory effects. Catalyzes S-adenosylmethionine-dependent regioselective 3'-O-methylation of flavonoids; active on various hydroxylated flavonoid substrates, including quercetin, rhamnetin, luteolin (LUT), 7,8,3'4'-tetrahydroxy-flavone and taxifolin, and, with a lower efficiency, eupatorin and hesperetin. This is Flavonoid 3'-O-methyltransferase 3 from Mentha piperita (Peppermint).